The following is a 790-amino-acid chain: Penicillin-binding protein 1A (790 aa).

Residues 1 to 20 (MANVRKRRKKKNEHKALRLT) are Cytoplasmic-facing. Residues 21–41 (FITLLMVFLFSCVAAAGVGLA) traverse the membrane as a helical; Signal-anchor for type II membrane protein segment. At 42 to 790 (MIKAAPPLDV…RKRKMIKPQI (749 aa)) the chain is on the extracellular side. Residues 61-230 (SVIYDDKNKL…PQSPSTFYNA (170 aa)) form a transglycosylase region. The Proton donor; for transglycosylase activity role is filled by glutamate 100. A transpeptidase region spans residues 363 to 656 (ASVSIVDYKT…AALIWKLIMG (294 aa)). Catalysis depends on serine 402, which acts as the Acyl-ester intermediate; for transpeptidase activity. The segment at 720-790 (NKDKDDDDDD…RKRKMIKPQI (71 aa)) is disordered. The span at 724–740 (DDDDDDKDKDKEDEEEN) shows a compositional bias: acidic residues. Residues 741 to 779 (KDEKNEDKKEAKDNTKNKDKDKKKDNDRKIDMDKKPDSS) show a composition bias toward basic and acidic residues. Residues 780–790 (KRKRKMIKPQI) are compositionally biased toward basic residues.

In the N-terminal section; belongs to the glycosyltransferase 51 family. This sequence in the C-terminal section; belongs to the transpeptidase family.

The protein localises to the cell membrane. The catalysed reaction is [GlcNAc-(1-&gt;4)-Mur2Ac(oyl-L-Ala-gamma-D-Glu-L-Lys-D-Ala-D-Ala)](n)-di-trans,octa-cis-undecaprenyl diphosphate + beta-D-GlcNAc-(1-&gt;4)-Mur2Ac(oyl-L-Ala-gamma-D-Glu-L-Lys-D-Ala-D-Ala)-di-trans,octa-cis-undecaprenyl diphosphate = [GlcNAc-(1-&gt;4)-Mur2Ac(oyl-L-Ala-gamma-D-Glu-L-Lys-D-Ala-D-Ala)](n+1)-di-trans,octa-cis-undecaprenyl diphosphate + di-trans,octa-cis-undecaprenyl diphosphate + H(+). It carries out the reaction Preferential cleavage: (Ac)2-L-Lys-D-Ala-|-D-Ala. Also transpeptidation of peptidyl-alanyl moieties that are N-acyl substituents of D-alanine.. It participates in cell wall biogenesis; peptidoglycan biosynthesis. In terms of biological role, cell wall formation. Synthesis of cross-linked peptidoglycan from the lipid intermediates. The enzyme has a penicillin-insensitive transglycosylase N-terminal domain (formation of linear glycan strands) and a penicillin-sensitive transpeptidase C-terminal domain (cross-linking of the peptide subunits). The polypeptide is Penicillin-binding protein 1A (pbpA) (Clostridium tetani (strain Massachusetts / E88)).